Here is a 141-residue protein sequence, read N- to C-terminus: Large ribosomal subunit protein bL17 (141 aa).

The protein belongs to the bacterial ribosomal protein bL17 family. In terms of assembly, part of the 50S ribosomal subunit. Contacts protein L32.

The chain is Large ribosomal subunit protein bL17 from Allorhizobium ampelinum (strain ATCC BAA-846 / DSM 112012 / S4) (Agrobacterium vitis (strain S4)).